The sequence spans 287 residues: ADP-dependent (S)-NAD(P)H-hydrate dehydratase (287 aa).

Residues T7–F283 enclose the YjeF C-terminal domain. Residues A42 and H159 each coordinate (6S)-NADPHX. Residues K196 to D200 and G224 contribute to the AMP site. A (6S)-NADPHX-binding site is contributed by D225.

The protein belongs to the NnrD/CARKD family. As to quaternary structure, homotetramer. It depends on Mg(2+) as a cofactor.

It carries out the reaction (6S)-NADHX + ADP = AMP + phosphate + NADH + H(+). The catalysed reaction is (6S)-NADPHX + ADP = AMP + phosphate + NADPH + H(+). Its function is as follows. Catalyzes the dehydration of the S-form of NAD(P)HX at the expense of ADP, which is converted to AMP. Together with NAD(P)HX epimerase, which catalyzes the epimerization of the S- and R-forms, the enzyme allows the repair of both epimers of NAD(P)HX, a damaged form of NAD(P)H that is a result of enzymatic or heat-dependent hydration. The chain is ADP-dependent (S)-NAD(P)H-hydrate dehydratase from Nitrosopumilus maritimus (strain SCM1).